Reading from the N-terminus, the 507-residue chain is Pyridoxine 4-oxidase (507 aa).

H448 (proton acceptor) is an active-site residue.

Belongs to the GMC oxidoreductase family. Monomer. The cofactor is FAD.

The enzyme catalyses pyridoxine + O2 = pyridoxal + H2O2. The protein operates within cofactor degradation; B6 vitamer degradation; pyridoxal from pyridoxine (oxidase route): step 1/1. The polypeptide is Pyridoxine 4-oxidase (pno) (Microbacterium luteolum (Aureobacterium luteolum)).